Reading from the N-terminus, the 248-residue chain is ATP synthase subunit a, chloroplastic (248 aa).

5 helical membrane-spanning segments follow: residues 37 to 57, 96 to 116, 135 to 155, 200 to 220, and 221 to 241; these read AQVL…AFVT, VPFI…GALF, INTT…AGLH, LVVA…MMFL, and GLFT…AYIG.

Belongs to the ATPase A chain family. As to quaternary structure, F-type ATPases have 2 components, CF(1) - the catalytic core - and CF(0) - the membrane proton channel. CF(1) has five subunits: alpha(3), beta(3), gamma(1), delta(1), epsilon(1). CF(0) has four main subunits: a, b, b' and c.

It is found in the plastid. Its subcellular location is the chloroplast thylakoid membrane. Key component of the proton channel; it plays a direct role in the translocation of protons across the membrane. The sequence is that of ATP synthase subunit a, chloroplastic from Psilotum nudum (Whisk fern).